Consider the following 85-residue polypeptide: Large ribosomal subunit protein eL34 (85 aa).

Belongs to the eukaryotic ribosomal protein eL34 family.

The polypeptide is Large ribosomal subunit protein eL34 (Saccharolobus islandicus (strain M.16.27) (Sulfolobus islandicus)).